The sequence spans 1544 residues: Lysophospholipase NTE1 (1544 aa).

The Cytoplasmic segment spans residues 1–37 (MSTIEIVSTVAEYTEIHSPVSSKFLLPSARDSSSSIS). Residues 38–58 (LFSAIFWFWSWLFFKIMNIFL) form a helical membrane-spanning segment. The Lumenal portion of the chain corresponds to 59–76 (YYIPNIIVNLFSVNFQIT). Residues 77 to 97 (LSLSSIVITLTGIISFCFLIV) form a helical membrane-spanning segment. The Cytoplasmic segment spans residues 98 to 1544 (RYKYLTRYSK…RKSLYRRSSI (1447 aa)). Disordered regions lie at residues 265–312 (RLFS…RNYP) and 424–552 (ESPS…EETE). A compositionally biased stretch (polar residues) spans 275 to 310 (NPASNPLSPDNTGSKSFDPLSSGNFNDTSLSSSDRN). The span at 425–447 (SPSVSINKTSSSSSSLPKKSTTS) shows a compositional bias: low complexity. Composition is skewed to polar residues over residues 448–458 (LRPLNRNQSSR) and 517–536 (QISS…TTKF). Residues 537 to 546 (ENIRDRTFSD) are compositionally biased toward basic and acidic residues. Residues 681-811 (SFES…LKSL) and 807-960 (KLKS…VANK) contribute to the a nucleoside 3',5'-cyclic phosphate site. Residues 1237 to 1401 (LVLGGGGSRG…LDNLPVMEMK (165 aa)) enclose the PNPLA domain. The GXGXXG signature appears at 1241–1246 (GGGSRG). A GXSXG motif is present at residues 1268 to 1272 (GTSIG). S1270 (nucleophile) is an active-site residue. Catalysis depends on D1388, which acts as the Proton acceptor. A DGA/G motif is present at residues 1388 to 1390 (DGG).

This sequence belongs to the NTE family.

It localises to the endoplasmic reticulum membrane. The catalysed reaction is a 1-acyl-sn-glycero-3-phosphocholine + H2O = sn-glycerol 3-phosphocholine + a fatty acid + H(+). Its activity is regulated as follows. Inhibited by organophosphorus esters. Its function is as follows. Intracellular phospholipase B that catalyzes the double deacylation of phosphatidylcholine (PC) to glycerophosphocholine (GroPCho). Plays an important role in membrane lipid homeostasis. Responsible for the rapid PC turnover in response to inositol, elevated temperatures, or when choline is present in the growth medium. In Debaryomyces hansenii (strain ATCC 36239 / CBS 767 / BCRC 21394 / JCM 1990 / NBRC 0083 / IGC 2968) (Yeast), this protein is Lysophospholipase NTE1 (NTE1).